Reading from the N-terminus, the 488-residue chain is MMFLFENSINMIKYSIYLVPLIIMILLSISIKEDSNRMMLLFKSLKLTIILILVLLTIEEAIYVKLNGHLIKTELITFVEYILLVVSYLIISMFEEGVKEGRKTKITEEALILMYSSLIGMLISMEAHNLITLFLSLEITSICFYILALNKNSRKVSIEGGLKYYIIGGIASTIILLGIVSIYKNTGSLMYTDILVIGMERIGNYQVQMGIALIVLGLIIKLGVAPFHGWLIDTYEGTGMLMTFYLTITQKIVTIIVLINLYKNLITYLNIEVINKGLLVLILVTLIVGTVGSLRQQKVIRFIAYSAIVNSALLILFFVGNNTEELIIYSIYYLINYIIGLAVLINIIIGVVKTKNGGNIEILSELKNIWLNNKVIGISLIIVLIYLAGLPPFTNFISKIILILPLIVEGKIYITMIIFFLTVGIMIYYMNVVKIIIIDKKQEVGVETYKMTKGGSITNIVGGIIWIIISQIYLDEIISIIKIIVAIN.

The next 14 helical transmembrane spans lie at 11-31 (MIKYSIYLVPLIIMILLSISI), 38-58 (MMLLFKSLKLTIILILVLLTI), 74-94 (ELITFVEYILLVVSYLIISMF), 106-126 (ITEEALILMYSSLIGMLISME), 129-149 (NLITLFLSLEITSICFYILAL), 162-182 (LKYYIIGGIASTIILLGIVSI), 211-231 (IALIVLGLIIKLGVAPFHGWL), 239-259 (GMLMTFYLTITQKIVTIIVLI), 271-291 (IEVINKGLLVLILVTLIVGTV), 299-319 (VIRFIAYSAIVNSALLILFFV), 331-351 (IYYLINYIIGLAVLINIIIGV), 376-396 (IGISLIIVLIYLAGLPPFTNF), 412-434 (IYITMIIFFLTVGIMIYYMNVVK), and 460-480 (IVGGIIWIIISQIYLDEIISI).

Belongs to the complex I subunit 2 family.

The protein localises to the mitochondrion inner membrane. The catalysed reaction is a ubiquinone + NADH + 5 H(+)(in) = a ubiquinol + NAD(+) + 4 H(+)(out). Its function is as follows. Core subunit of the mitochondrial membrane respiratory chain NADH dehydrogenase (Complex I) that is believed to belong to the minimal assembly required for catalysis. Complex I functions in the transfer of electrons from NADH to the respiratory chain. The immediate electron acceptor for the enzyme is believed to be ubiquinone. The sequence is that of NADH-ubiquinone oxidoreductase chain 2 (nad2) from Dictyostelium discoideum (Social amoeba).